We begin with the raw amino-acid sequence, 439 residues long: ATP-dependent protease ATPase subunit HslU (439 aa).

Residues I17, 59 to 64 (GVGKTE), D251, E317, and R389 contribute to the ATP site.

Belongs to the ClpX chaperone family. HslU subfamily. As to quaternary structure, a double ring-shaped homohexamer of HslV is capped on each side by a ring-shaped HslU homohexamer. The assembly of the HslU/HslV complex is dependent on binding of ATP.

It is found in the cytoplasm. In terms of biological role, ATPase subunit of a proteasome-like degradation complex; this subunit has chaperone activity. The binding of ATP and its subsequent hydrolysis by HslU are essential for unfolding of protein substrates subsequently hydrolyzed by HslV. HslU recognizes the N-terminal part of its protein substrates and unfolds these before they are guided to HslV for hydrolysis. The sequence is that of ATP-dependent protease ATPase subunit HslU from Campylobacter jejuni subsp. jejuni serotype O:6 (strain 81116 / NCTC 11828).